The chain runs to 275 residues: Putative acyl-[acyl-carrier-protein] desaturase DesA2 (275 aa).

5 residues coordinate Fe cation: Glu-107, His-110, Glu-159, Glu-189, and His-192.

This sequence belongs to the fatty acid desaturase type 2 family. Homodimer. Requires Fe(2+) as cofactor.

It participates in lipid metabolism; fatty acid metabolism. May be a desaturase involved in mycobacterial fatty acid biosynthesis. The chain is Putative acyl-[acyl-carrier-protein] desaturase DesA2 (desA2) from Mycobacterium tuberculosis (strain CDC 1551 / Oshkosh).